The sequence spans 244 residues: MEVTGISAPTVMVFISSSLNSFRSEKRYSRSLTIAEFKCKLELVVGSPASCMELELYGADDKFYSKLDQEDALLGSYPVDDGCRIHVIDHSGVRLGEYEDVSKVEKYEISPEAYERRQNTVRSFMKRSKLGPYNEELRAQQEAEAAQRLSEEKAQASAISVGSRCEVRAPDHSLRRGTVMYVGLTDFKPGYWVGVRYDEPLGKNDGSVNGKRYFECQAKYGAFVKPSAVTVGDFPEEDYGLDEM.

Methionine 1 carries the N-acetylmethionine modification. Serine 65 is subject to Phosphoserine; by PAK1. Residue tyrosine 98 is modified to Phosphotyrosine. The residue at position 110 (serine 110) is a Phosphoserine. Serine 128 is modified (phosphoserine; by PAK1). The 43-residue stretch at 183-225 folds into the CAP-Gly domain; sequence GLTDFKPGYWVGVRYDEPLGKNDGSVNGKRYFECQAKYGAFVK. Position 219 is an N6-acetyllysine (lysine 219).

It belongs to the TBCB family. As to quaternary structure, supercomplex made of cofactors A to E. Cofactors A and D function by capturing and stabilizing tubulin in a quasi-native conformation. Cofactor E binds to the cofactor D-tubulin complex; interaction with cofactor C then causes the release of tubulin polypeptides that are committed to the native state. Cofactors B and E can form a heterodimer which binds to alpha-tubulin and enhances their ability to dissociate tubulin heterodimers. Interacts with GAN. Interacts with DCTN1. In terms of processing, phosphorylation by PAK1 is required for normal function. Post-translationally, ubiquitinated in the presence of GAN which targets it for degradation by the proteasome. Widely expressed with highest levels in brain. Broadly distributed throughout the neonate brain but restricted mainly to ependymary cells in the adult brain where it is concentrated in the cilia.

Its subcellular location is the cytoplasm. The protein localises to the cytoskeleton. Its function is as follows. Binds to alpha-tubulin folding intermediates after their interaction with cytosolic chaperonin in the pathway leading from newly synthesized tubulin to properly folded heterodimer. Involved in regulation of tubulin heterodimer dissociation. May function as a negative regulator of axonal growth. In Mus musculus (Mouse), this protein is Tubulin-folding cofactor B (Tbcb).